The sequence spans 201 residues: MKVLILDNYDSFTFNLYQIVGEILEEREKPFQLDVIRNDEKPFEWIKSANYDKIIISPGPGHPADPAYFGVSADILKELGKTPPVLGICLGMQGMATVFGGEVVRANIAMHGKLSPIEHDGKGVFSGLTQGIEIMRYHSLVAKEISLPNDLEITARVSAGEGKGEIMGLRHKSLKIEGVQFHPESFGSEEGKCLLRNFINS.

The Glutamine amidotransferase type-1 domain occupies 2 to 201 (KVLILDNYDS…KCLLRNFINS (200 aa)). 59 to 61 (GPG) lines the L-glutamine pocket. Cys89 (nucleophile; for GATase activity) is an active-site residue. L-glutamine-binding positions include Gln93 and 139–140 (SL). Active-site for GATase activity residues include His182 and Glu184.

Heterotetramer consisting of two non-identical subunits: a beta subunit (TrpG) and a large alpha subunit (TrpE).

It catalyses the reaction chorismate + L-glutamine = anthranilate + pyruvate + L-glutamate + H(+). It functions in the pathway amino-acid biosynthesis; L-tryptophan biosynthesis; L-tryptophan from chorismate: step 1/5. Its function is as follows. Part of a heterotetrameric complex that catalyzes the two-step biosynthesis of anthranilate, an intermediate in the biosynthesis of L-tryptophan. In the first step, the glutamine-binding beta subunit (TrpG) of anthranilate synthase (AS) provides the glutamine amidotransferase activity which generates ammonia as a substrate that, along with chorismate, is used in the second step, catalyzed by the large alpha subunit of AS (TrpE) to produce anthranilate. In the absence of TrpG, TrpE can synthesize anthranilate directly from chorismate and high concentrations of ammonia. This chain is Anthranilate synthase component 2 (trpG), found in Leptospira biflexa.